A 481-amino-acid chain; its full sequence is ATP synthase subunit beta, chloroplastic (481 aa).

Residue 163 to 170 coordinates ATP; sequence GGAGVGKT.

The protein belongs to the ATPase alpha/beta chains family. As to quaternary structure, F-type ATPases have 2 components, CF(1) - the catalytic core - and CF(0) - the membrane proton channel. CF(1) has five subunits: alpha(3), beta(3), gamma(1), delta(1), epsilon(1). CF(0) has four main subunits: a(1), b(1), b'(1) and c(9-12).

It is found in the plastid. The protein localises to the chloroplast thylakoid membrane. The catalysed reaction is ATP + H2O + 4 H(+)(in) = ADP + phosphate + 5 H(+)(out). Produces ATP from ADP in the presence of a proton gradient across the membrane. The catalytic sites are hosted primarily by the beta subunits. The chain is ATP synthase subunit beta, chloroplastic from Tupiella akineta (Green alga).